The chain runs to 164 residues: Pyruvoyl-dependent arginine decarboxylase (164 aa).

Residue Ser-52 is modified to Pyruvic acid (Ser).

This sequence belongs to the PdaD family. Pyruvate serves as cofactor.

It catalyses the reaction L-arginine + H(+) = agmatine + CO2. The protein is Pyruvoyl-dependent arginine decarboxylase of Methanococcus maripaludis (strain C6 / ATCC BAA-1332).